The primary structure comprises 150 residues: Transcriptional repressor NrdR (150 aa).

A zinc finger spans residues 3–34 (CPFCNFEESKVVDSRATDDNTTIRRRRECLNC). Positions 49–139 (VLVVKKDLAR…VYRQFKDINT (91 aa)) constitute an ATP-cone domain.

It belongs to the NrdR family. Requires Zn(2+) as cofactor.

Functionally, negatively regulates transcription of bacterial ribonucleotide reductase nrd genes and operons by binding to NrdR-boxes. This chain is Transcriptional repressor NrdR, found in Clostridium botulinum (strain Eklund 17B / Type B).